Reading from the N-terminus, the 716-residue chain is Calpain-1 catalytic subunit (716 aa).

The Calpain catalytic domain maps to 55 to 354 (LFRDEAFPPV…FTRLEICNLT (300 aa)). Glutamine 109 and aspartate 114 together coordinate Ca(2+). Residues cysteine 115, histidine 272, and asparagine 296 contribute to the active site. Ca(2+) is bound by residues aspartate 318 and glutamate 323. Residue threonine 354 is modified to Phosphothreonine. A domain III region spans residues 355–528 (PDALKSQRFR…KSAGTQELDD (174 aa)). A linker region spans residues 529-544 (QVQANLPDEQVLSEEE). EF-hand domains are found at residues 543–578 (EEIDENFKSLFRQLAGEDMEISVKELRTILNRIISK), 587–620 (FSLESCRSMVNLMDRDGNGKLGLVEFNILWNRIR), 617–652 (NRIRNYLSIFRKFDLDKSGSMSAYEMRMAIEFAGFK), and 682–716 (VRLETMFRFFKTLDTDLDGVVTFDLFKWLQLTMFA). The domain IV stretch occupies residues 545–715 (IDENFKSLFR…LFKWLQLTMF (171 aa)). 10 residues coordinate Ca(2+): aspartate 600, aspartate 602, asparagine 604, lysine 606, glutamate 611, aspartate 630, aspartate 632, serine 634, serine 636, and glutamate 641.

This sequence belongs to the peptidase C2 family. As to quaternary structure, forms a heterodimer with a small (regulatory) subunit CAPNS1. Ca(2+) serves as cofactor. In terms of processing, undergoes calcium-induced successive autoproteolytic cleavages that generate a membrane-bound 78 kDa active form and an intracellular 75 kDa active form. Calpastatin reduces with high efficiency the transition from 78 kDa to 75 kDa calpain forms.

Its subcellular location is the cytoplasm. It is found in the cell membrane. It carries out the reaction Broad endopeptidase specificity.. Activated by micromolar concentrations of calcium and inhibited by calpastatin. Calcium-regulated non-lysosomal thiol-protease which catalyzes limited proteolysis of substrates involved in cytoskeletal remodeling and signal transduction. Proteolytically cleaves CTBP1. Cleaves and activates caspase-7 (CASP7). In Bos taurus (Bovine), this protein is Calpain-1 catalytic subunit.